The following is a 372-amino-acid chain: Cell division protein FtsZ 1 (372 aa).

GTP-binding positions include 51-55 (GAGCN), 138-140 (GTG), Glu-169, Arg-173, and Asp-216. A compositionally biased stretch (acidic residues) spans 350–360 (PEEETPLETPE). A disordered region spans residues 350 to 372 (PEEETPLETPEESPSIEISIPEL). Residues 361–372 (ESPSIEISIPEL) are compositionally biased toward low complexity.

It belongs to the FtsZ family. Homodimer. Polymerizes to form a dynamic ring structure in a strictly GTP-dependent manner. Interacts directly with several other division proteins.

It localises to the cytoplasm. Its function is as follows. Essential cell division protein that forms a contractile ring structure (Z ring) at the future cell division site. The regulation of the ring assembly controls the timing and the location of cell division. One of the functions of the FtsZ ring is to recruit other cell division proteins to the septum to produce a new cell wall between the dividing cells. Binds GTP and shows GTPase activity. In Pyrococcus furiosus (strain ATCC 43587 / DSM 3638 / JCM 8422 / Vc1), this protein is Cell division protein FtsZ 1.